The sequence spans 317 residues: Phospho-N-acetylmuramoyl-pentapeptide-transferase (317 aa).

9 helical membrane passes run 6-26 (IVMAIVISFIVASILGPIIIP), 52-72 (PTIGGLIFIFATIITMFIMVG), 78-98 (AMIALYSFVGFGFVGFLDDLL), 114-134 (MILLLIVSGFLTWYAYKYIGT), 145-165 (INFGLFYIPFVMFYFAGVTNA), 171-191 (GLDGLATSVTVLVTTFLGIIS), 194-214 (LGHISLAIFCVALAGALLAFL), 223-244 (VFMGDTGSLALGGAVAMVALIL), and 297-317 (KIVSVFSIITVVFCFIAFASL).

This sequence belongs to the glycosyltransferase 4 family. MraY subfamily. It depends on Mg(2+) as a cofactor.

Its subcellular location is the cell membrane. The catalysed reaction is UDP-N-acetyl-alpha-D-muramoyl-L-alanyl-gamma-D-glutamyl-meso-2,6-diaminopimeloyl-D-alanyl-D-alanine + di-trans,octa-cis-undecaprenyl phosphate = di-trans,octa-cis-undecaprenyl diphospho-N-acetyl-alpha-D-muramoyl-L-alanyl-D-glutamyl-meso-2,6-diaminopimeloyl-D-alanyl-D-alanine + UMP. It functions in the pathway cell wall biogenesis; peptidoglycan biosynthesis. In terms of biological role, catalyzes the initial step of the lipid cycle reactions in the biosynthesis of the cell wall peptidoglycan: transfers peptidoglycan precursor phospho-MurNAc-pentapeptide from UDP-MurNAc-pentapeptide onto the lipid carrier undecaprenyl phosphate, yielding undecaprenyl-pyrophosphoryl-MurNAc-pentapeptide, known as lipid I. The protein is Phospho-N-acetylmuramoyl-pentapeptide-transferase of Clostridium perfringens (strain 13 / Type A).